A 903-amino-acid chain; its full sequence is Protein translocase subunit SecA (903 aa).

Residues Gln-89, 107 to 111 (GEGKT), and Asp-502 contribute to the ATP site. Cys-886, Cys-888, Cys-897, and His-898 together coordinate Zn(2+).

The protein belongs to the SecA family. Monomer and homodimer. Part of the essential Sec protein translocation apparatus which comprises SecA, SecYEG and auxiliary proteins SecDF-YajC and YidC. Zn(2+) is required as a cofactor.

The protein resides in the cell inner membrane. It is found in the cytoplasm. It carries out the reaction ATP + H2O + cellular proteinSide 1 = ADP + phosphate + cellular proteinSide 2.. In terms of biological role, part of the Sec protein translocase complex. Interacts with the SecYEG preprotein conducting channel. Has a central role in coupling the hydrolysis of ATP to the transfer of proteins into and across the cell membrane, serving both as a receptor for the preprotein-SecB complex and as an ATP-driven molecular motor driving the stepwise translocation of polypeptide chains across the membrane. This is Protein translocase subunit SecA from Rhizobium meliloti (strain 1021) (Ensifer meliloti).